The chain runs to 526 residues: Bifunctional purine biosynthesis protein PurH (526 aa).

An MGS-like domain is found at 1-145 (MSKAPLALLS…KNHAHVGIVT (145 aa)).

This sequence belongs to the PurH family.

It catalyses the reaction (6R)-10-formyltetrahydrofolate + 5-amino-1-(5-phospho-beta-D-ribosyl)imidazole-4-carboxamide = 5-formamido-1-(5-phospho-D-ribosyl)imidazole-4-carboxamide + (6S)-5,6,7,8-tetrahydrofolate. The catalysed reaction is IMP + H2O = 5-formamido-1-(5-phospho-D-ribosyl)imidazole-4-carboxamide. Its pathway is purine metabolism; IMP biosynthesis via de novo pathway; 5-formamido-1-(5-phospho-D-ribosyl)imidazole-4-carboxamide from 5-amino-1-(5-phospho-D-ribosyl)imidazole-4-carboxamide (10-formyl THF route): step 1/1. It functions in the pathway purine metabolism; IMP biosynthesis via de novo pathway; IMP from 5-formamido-1-(5-phospho-D-ribosyl)imidazole-4-carboxamide: step 1/1. This chain is Bifunctional purine biosynthesis protein PurH, found in Psychrobacter arcticus (strain DSM 17307 / VKM B-2377 / 273-4).